Consider the following 239-residue polypeptide: Myogenic factor 6 (239 aa).

The disordered stretch occupies residues 28 to 64 (HLDMSGVSPLYNGNDSPLSPGQDNVPSETGGESSGDE). A compositionally biased stretch (polar residues) spans 38-58 (YNGNDSPLSPGQDNVPSETGG). The 52-residue stretch at 96–147 (DRRKAATLRERRRLKKINEAFDALKRKTVANPNQRLPKVEILRSAISYIERL) folds into the bHLH domain. Residues 155–189 (DEQERSQSGASDTRNDKEQNRPSGGDYRWKKASNT) form a disordered region.

Efficient DNA binding requires dimerization with another bHLH protein.

It is found in the nucleus. Involved in muscle differentiation (myogenic factor). Induces fibroblasts to differentiate into myoblasts. Probable sequence specific DNA-binding protein. This chain is Myogenic factor 6 (myf6), found in Takifugu rubripes (Japanese pufferfish).